Here is a 156-residue protein sequence, read N- to C-terminus: Anaerobic ribonucleoside-triphosphate reductase-activating protein (156 aa).

[4Fe-4S] cluster contacts are provided by C26, C30, and C33. Residues 32–34 and G72 each bind S-adenosyl-L-methionine; that span reads GCY.

The protein belongs to the organic radical-activating enzymes family. In terms of assembly, forms a tetramer composed of two NrdD and two NrdG subunits. It depends on [4Fe-4S] cluster as a cofactor.

It carries out the reaction glycyl-[protein] + reduced [flavodoxin] + S-adenosyl-L-methionine = glycin-2-yl radical-[protein] + semiquinone [flavodoxin] + 5'-deoxyadenosine + L-methionine + H(+). In terms of biological role, activation of anaerobic ribonucleoside-triphosphate reductase under anaerobic conditions by generation of an organic free radical, using S-adenosylmethionine and reduced flavodoxin as cosubstrates to produce 5'-deoxy-adenosine. This Escherichia coli (Bacteriophage T4) protein is Anaerobic ribonucleoside-triphosphate reductase-activating protein (NRDG).